We begin with the raw amino-acid sequence, 1019 residues long: Macrophage colony-stimulating factor 1 receptor 2 (1019 aa).

Residues 1 to 18 form the signal peptide; sequence MKSYCLLLSITLSCCCSA. Residues 19–576 lie on the Extracellular side of the membrane; that stretch reads EDLPDPPSIH…LREHNSAFMS (558 aa). Ig-like C2-type domains lie at 37–109, 106–212, and 224–312; these read QAEA…IHLY, IHLY…LLVA, and QNKA…LIVL. The cysteines at positions 52 and 92 are disulfide-linked. N-linked (GlcNAc...) asparagine glycosylation is found at asparagine 96, asparagine 148, asparagine 169, asparagine 249, asparagine 342, asparagine 346, asparagine 355, asparagine 369, asparagine 379, asparagine 408, asparagine 422, asparagine 429, asparagine 433, and asparagine 514. Intrachain disulfides connect cysteine 139/cysteine 193 and cysteine 239/cysteine 294. 2 Ig-like C2-type domains span residues 383-474 and 487-567; these read STTV…LRIY and TLTC…VFHL. A disulfide bond links cysteine 490 and cysteine 552. Residues 577–597 form a helical membrane-spanning segment; sequence ALIGAGSTAAILFLLLLVVFY. Residues 598-1019 are Cytoplasmic-facing; that stretch reads KWRQKPKYEI…LSVTNIYQLS (422 aa). A regulatory juxtamembrane domain region spans residues 601–633; that stretch reads QKPKYEIRWKIIESTEGNHYTFVDPTLLPYNYK. Phosphotyrosine; by autocatalysis is present on tyrosine 620. In terms of domain architecture, Protein kinase spans 641–963; sequence LRLGAVLGSG…MICQLIDRLL (323 aa). Residues 647–655 and lysine 674 contribute to the ATP site; that span reads LGSGAFGKV. 2 positions are modified to phosphotyrosine; by autocatalysis: tyrosine 756 and tyrosine 778. The active-site Proton acceptor is aspartate 827. Positions 845–867 are activation loop; that stretch reads DFGLARDIQNDDSYIVQGNARLP. Phosphotyrosine; by autocatalysis is present on residues tyrosine 858 and tyrosine 974. The disordered stretch occupies residues 970 to 1001; that stretch reads NHQSYSNINETKKDDFKGGKSQRRGEEEEQRR. Positions 979 to 1001 are enriched in basic and acidic residues; the sequence is ETKKDDFKGGKSQRRGEEEEQRR. Phosphotyrosine; by autocatalysis is present on tyrosine 1016.

The protein belongs to the protein kinase superfamily. Tyr protein kinase family. CSF-1/PDGF receptor subfamily. In terms of assembly, monomer. Homodimer. Interacts with CSF1. In terms of processing, autophosphorylated in response to CSF1 binding. autophosphorylation, leading to its degradation. Ubiquitinated. Becomes rapidly polyubiquitinated after autophosphorylation, leading to its degradation.

It localises to the cell membrane. The enzyme catalyses L-tyrosyl-[protein] + ATP = O-phospho-L-tyrosyl-[protein] + ADP + H(+). With respect to regulation, present in an inactive conformation in the absence of bound ligand. CSF1 binding leads to dimerization and activation by autophosphorylation on tyrosine residues. Its function is as follows. Tyrosine-protein kinase that acts as a cell-surface receptor for CSF1 and plays an essential role in the regulation of survival, proliferation and differentiation of hematopoietic precursor cells, especially mononuclear phagocytes, such as macrophages and monocytes. Plays an important role in innate immunity and in inflammatory processes. Plays an important role in the regulation of osteoclast proliferation and differentiation, the regulation of bone resorption, and is required for normal bone development. Promotes reorganization of the actin cytoskeleton, regulates formation of membrane ruffles, cell adhesion and cell migration. Activates several signaling pathways in response to ligand binding. The polypeptide is Macrophage colony-stimulating factor 1 receptor 2 (csf1r2) (Takifugu rubripes (Japanese pufferfish)).